The chain runs to 209 residues: MSNVDINHARALVYQLLSSLFAREIDEQRLKQLTSEQAQQFWTQLGYAPEFSASVASIQKVLNGLTSDEALLELAADYCGLFLVGTKHSASPYASLYLNREEEPLLFGQQHQQMSEFLHQSKLQVQSHFPEPADHLAVILAYMGHLACHSEDAAQLSFLNACIDSWLAKFVAKVVECDSKHSNGFYSALATLTLAWVQQDKQQLEQAMH.

Belongs to the TorD/DmsD family. TorD subfamily.

It localises to the cytoplasm. Its function is as follows. Involved in the biogenesis of TorA. Acts on TorA before the insertion of the molybdenum cofactor and, as a result, probably favors a conformation of the apoenzyme that is competent for acquiring the cofactor. The sequence is that of Chaperone protein TorD from Shewanella sp. (strain ANA-3).